Consider the following 221-residue polypeptide: Iron-sulfur cluster repair protein YtfE (221 aa).

Belongs to the RIC family. YtfE subfamily. Homodimer.

It is found in the cytoplasm. Di-iron-containing protein involved in the repair of iron-sulfur clusters damaged by oxidative and nitrosative stress conditions. The polypeptide is Iron-sulfur cluster repair protein YtfE (Dickeya chrysanthemi (strain Ech1591) (Dickeya zeae (strain Ech1591))).